A 512-amino-acid polypeptide reads, in one-letter code: Cytochrome P450 76C1 (512 aa).

Residues 3-23 form a helical membrane-spanning segment; sequence IISGQALLLLFCFILSCFLIF. C450 contacts heme.

Belongs to the cytochrome P450 family. Heme is required as a cofactor.

The protein localises to the membrane. The protein is Cytochrome P450 76C1 (CYP76C1) of Arabidopsis thaliana (Mouse-ear cress).